The following is a 671-amino-acid chain: Receptor-interacting serine/threonine-protein kinase 1 (671 aa).

S6 carries the post-translational modification Phosphoserine; by IKKA and IKKB. Residues 17–289 (FLESAELDSG…GIEEKFRPFY (273 aa)) enclose the Protein kinase domain. S20 bears the Phosphoserine; by autocatalysis mark. Residues 23–31 (LDSGGFGKV) and K45 contribute to the ATP site. The residue at position 25 (S25) is a Phosphoserine; by IKKA and IKKB. Catalysis depends on D138, which acts as the Proton acceptor. At S161 the chain carries Phosphoserine; by RIPK3 and autocatalysis. S166 carries the phosphoserine; by autocatalysis modification. The segment at 290-582 (LSQLEESVEE…QAIFDNTTSL (293 aa)) is interaction with SQSTM1. At S303 the chain carries Phosphoserine. Phosphoserine; by MAP3K7 is present on residues S320, S331, and S333. Residues 331-348 (SRSNSATEQPGSLHSSQG) are compositionally biased toward polar residues. The disordered stretch occupies residues 331-354 (SRSNSATEQPGSLHSSQGLGMGPV). A Glycyl lysine isopeptide (Lys-Gly) (interchain with G-Cter in ubiquitin) cross-link involves residue K377. A Phosphotyrosine modification is found at Y384. The tract at residues 389-455 (SRMDRQTKQQ…GNAVHQPSGL (67 aa)) is disordered. The span at 428 to 444 (NFQNTEGKGTAYSSAAS) shows a compositional bias: polar residues. The RIP homotypic interaction motif (RHIM) motif lies at 531-547 (YTIYNSTGIQIGAYNYM). One can recognise a Death domain in the interval 583–669 (TDKHLDPIRE…DLLSSLIYVS (87 aa)). Residue R603 is glycosylated ((Microbial infection) N-beta-linked (GlcNAc) arginine).

Belongs to the protein kinase superfamily. TKL Ser/Thr protein kinase family. As to quaternary structure, homodimer. Interacts (via RIP homotypic interaction motif) with RIPK3 (via RIP homotypic interaction motif); this interaction induces RIPK1 phosphorylation and formation of a RIPK1-RIPK3 necroptosis-inducing complex. Upon TNF-induced necrosis, the RIPK1-RIPK3 dimer further interacts with PGAM5 and MLKL; the formation of this complex leads to PGAM5 phosphorylation and increase in PGAM5 phosphatase activity. Interacts (via the death domain) with TNFRSF6 (via the death domain) and TRADD (via the death domain). Is recruited by TRADD to TNFRSF1A in a TNF-dependent process. Binds RNF216, EGFR, IKBKG, TRAF1, TRAF2 and TRAF3. Interacts with BNLF1. Interacts with SQSTM1 upon TNF-alpha stimulation. May interact with MAVS/IPS1. Interacts with ZFAND5. Interacts with RBCK1. Interacts with ZBP1. Interacts with BIRC2/c-IAP1, BIRC3/c-IAP2 and XIAP/BIRC4. Interacts (via kinase domain) with DAB2IP (via Ras-GAP domain); the interaction occurs in a TNF-alpha-dependent manner. Interacts with ARHGEF2. Interacts (via protein kinase domain) with RFFL; involved in RIPK1 ubiquitination. Interacts with RNF34; involved in RIPK1 ubiquitination. Interacts with TICAM1 and this interaction is enhanced in the presence of WDFY1. Interacts with PELI1. Interacts (via death domain) with CRADD (via death domain); the interaction is direct. Component of complex IIa composed of at least RIPK1, FADD and CASP8. Component of the AIM2 PANoptosome complex, a multiprotein complex that drives inflammatory cell death (PANoptosis). Interacts with MAP3K7, CFLAR, CASP8, FADD and NEMO. Interacts with TAX1BP1; this interaction negatively regulates RIPK1 ubiquitination. Interacts with GRB2. Interacts with DDX24; this interaction disrupts RLR signaling activation of IFN-dependent transcription factor IRF7. (Microbial infection) Interacts with mumps virus protein SH; this interaction inhibits downstream NF-kappa-B pathway activation. In terms of assembly, (Microbial infection) Interacts with Murid herpesvirus 1 protein RIR1. As to quaternary structure, (Microbial infection) Interacts (via RIP homotypic interaction motif) with herpes simplex virus 1/HHV-1 protein RIR1/ICP6 (via RIP homotypic interaction motif); this interaction prevents necroptosis activation. (Microbial infection) Interacts (via RIP homotypic interaction motif) with herpes simplex virus 2/HHV-2 protein RIR1/ICP10 (via RIP homotypic interaction motif); this interaction prevents necroptosis activation. Post-translationally, (Microbial infection) Proteolytically cleaved by S.flexneri OspD3 within the RIP homotypic interaction motif (RHIM), leading to its degradation and inhibition of necroptosis. Proteolytically cleaved by CASP8 at Asp-324. Cleavage is crucial for limiting TNF-induced apoptosis, necroptosis and inflammatory response. Cleavage abolishes NF-kappa-B activation and enhances the interaction of TRADD with FADD. Proteolytically cleaved by CASP6 during intrinsic apoptosis. In terms of processing, RIPK1 and RIPK3 undergo reciprocal auto- and trans-phosphorylation. Phosphorylation of Ser-161 by RIPK3 is necessary for the formation of the necroptosis-inducing complex. Phosphorylation at Ser-25 represses its kinase activity and consequently prevents TNF-mediated RIPK1-dependent cell death. Phosphorylated at Ser-320 by MAP3K7 which requires prior ubiquitination with 'Lys-63'-linked chains by BIRC2/c-IAP1 and BIRC3/c-IAP2. This phosphorylation positively regulates RIPK1 interaction with RIPK3 to promote necroptosis but negatively regulates RIPK1 kinase activity and its interaction with FADD to mediate apoptosis. Post-translationally, deubiquitinated by USP7; this modification is required for TNF-alpha-induced apoptosis. Ubiquitinated with 'Lys-11'-, 'Lys-48'-, 'Lys-63'- and linear-linked type ubiquitin. Polyubiquitination with 'Lys-63'-linked chains by TRAF2 induces association with the IKK complex. Deubiquitination of 'Lys-63'-linked chains and polyubiquitination with 'Lys-48'-linked chains by TNFAIP3 leads to RIPK1 proteasomal degradation and consequently down-regulates TNF-alpha-induced NF-kappa-B signaling. 'Lys-48'-linked polyubiquitination by RFFL or RNF34 also promotes proteasomal degradation and negatively regulates TNF-alpha-induced NF-kappa-B signaling. Linear polyubiquitinated; the head-to-tail linear polyubiquitination ('Met-1'-linked) is mediated by the LUBAC complex and decreases protein kinase activity. Deubiquitination of linear polyubiquitin by CYLD promotes the kinase activity. Polyubiquitinated with 'Lys-48' and 'Lys-63'-linked chains by BIRC2/c-IAP1 and BIRC3/c-IAP2, leading to activation of NF-kappa-B. Ubiquitinated with 'Lys-63'-linked chains by PELI1. Ubiquitination at Lys-377 with 'Lys-63'-linked chains by BIRC2/c-IAP1 and BIRC3/c-IAP2 is essential for its phosphorylation at Ser-320 mediated by MAP3K7. This ubiquitination is required for NF-kB activation, suppresses RIPK1 kinase activity and plays a critical role in preventing cell death during embryonic development. In terms of processing, (Microbial infection) Glycosylated at Arg-603 by enteropathogenic E.coli protein NleB1: arginine GlcNAcylation prevents homotypic/heterotypic death domain interactions.

The protein localises to the cytoplasm. The protein resides in the cell membrane. It carries out the reaction L-seryl-[protein] + ATP = O-phospho-L-seryl-[protein] + ADP + H(+). It catalyses the reaction L-threonyl-[protein] + ATP = O-phospho-L-threonyl-[protein] + ADP + H(+). With respect to regulation, serine-threonine kinase activity is inhibited by linear polyubiquitination ('Met-1'-linked) by the LUBAC complex. Inhibited by necrostatins, including necrostatin-1, necrostatin-3 and necrostatin-4. In terms of biological role, serine-threonine kinase which is a key regulator of TNF-mediated apoptosis, necroptosis and inflammatory pathways. Exhibits kinase activity-dependent functions that regulate cell death and kinase-independent scaffold functions regulating inflammatory signaling and cell survival. Has kinase-independent scaffold functions: upon binding of TNF to TNFR1, RIPK1 is recruited to the TNF-R1 signaling complex (TNF-RSC also known as complex I) where it acts as a scaffold protein promoting cell survival, in part, by activating the canonical NF-kappa-B pathway. Kinase activity is essential to regulate necroptosis and apoptosis, two parallel forms of cell death: upon activation of its protein kinase activity, regulates assembly of two death-inducing complexes, namely complex IIa (RIPK1-FADD-CASP8), which drives apoptosis, and the complex IIb (RIPK1-RIPK3-MLKL), which drives necroptosis. RIPK1 is required to limit CASP8-dependent TNFR1-induced apoptosis. In normal conditions, RIPK1 acts as an inhibitor of RIPK3-dependent necroptosis, a process mediated by RIPK3 component of complex IIb, which catalyzes phosphorylation of MLKL upon induction by ZBP1. Inhibits RIPK3-mediated necroptosis via FADD-mediated recruitment of CASP8, which cleaves RIPK1 and limits TNF-induced necroptosis. Required to inhibit apoptosis and necroptosis during embryonic development: acts by preventing the interaction of TRADD with FADD thereby limiting aberrant activation of CASP8. In addition to apoptosis and necroptosis, also involved in inflammatory response by promoting transcriptional production of pro-inflammatory cytokines, such as interleukin-6 (IL6). Phosphorylates RIPK3: RIPK1 and RIPK3 undergo reciprocal auto- and trans-phosphorylation. Phosphorylates DAB2IP at 'Ser-728' in a TNF-alpha-dependent manner, and thereby activates the MAP3K5-JNK apoptotic cascade. Required for ZBP1-induced NF-kappa-B activation in response to DNA damage. This is Receptor-interacting serine/threonine-protein kinase 1 from Homo sapiens (Human).